The chain runs to 450 residues: MGAPPGYRPSAWVHLLHQLPRADFQLRPVPSVFAPQEQEYQQALLLVAALAGLGLGLSLIFIAVYLIRFCCCRPPEPPGSKIPSPGGGCVTWSCIVALLAGCTGIGIGFYGNSETSDGVSQLSSALLHANHTLSTIDHLVLETVERLGEAVRTELTTLEEVLEPRTELVAAARGARRQAEAAAQQLQGLAFWQGVPLSPLQVAENVSFVEEYRWLAYVLLLLLELLVCLFTLLGLAKQSKWLVIVMTVMSLLVLVLSWGSMGLEAATAVGLSDFCSNPDPYVLNLTQEETGLSSDILSYYLLCNRAVSNPFQQRLTLSQRALANIHSQLLGLEREAVPQFPSAQKPLLSLEETLNVTEGNFHQLVALLHCRSLHKDYGAALRGLCEDALEGLLFLLLFSLLSAGALATALCSLPRAWALFPPSDDYDDTDDDDPFNPQESKRFVQWQSSI.

Residues 1 to 43 (MGAPPGYRPSAWVHLLHQLPRADFQLRPVPSVFAPQEQEYQQA) lie on the Extracellular side of the membrane. A helical membrane pass occupies residues 44 to 64 (LLLVAALAGLGLGLSLIFIAV). The Cytoplasmic portion of the chain corresponds to 65–88 (YLIRFCCCRPPEPPGSKIPSPGGG). Residues 89–109 (CVTWSCIVALLAGCTGIGIGF) form a helical membrane-spanning segment. The Extracellular segment spans residues 110–214 (YGNSETSDGV…NVSFVEEYRW (105 aa)). Asn130 and Asn205 each carry an N-linked (GlcNAc...) asparagine glycan. A helical membrane pass occupies residues 215–235 (LAYVLLLLLELLVCLFTLLGL). Residues 236–240 (AKQSK) are Cytoplasmic-facing. Residues 241–261 (WLVIVMTVMSLLVLVLSWGSM) form a helical membrane-spanning segment. The Extracellular segment spans residues 262-390 (GLEAATAVGL…LRGLCEDALE (129 aa)). 2 disulfide bridges follow: Cys275–Cys385 and Cys303–Cys370. 2 N-linked (GlcNAc...) asparagine glycosylation sites follow: Asn284 and Asn355. Residues 391–411 (GLLFLLLFSLLSAGALATALC) form a helical membrane-spanning segment. The Cytoplasmic portion of the chain corresponds to 412–450 (SLPRAWALFPPSDDYDDTDDDDPFNPQESKRFVQWQSSI). Positions 428-450 (DTDDDDPFNPQESKRFVQWQSSI) are disordered. Ser440 carries the post-translational modification Phosphoserine.

This sequence belongs to the tweety family. In terms of assembly, homotetramer; disulfide-linked. Homodimer. Post-translationally, N-glycosylated. Contains high-mannose, hybrid and complex oligosaccharides. Expressed in brain, eye, ovary and testis, and at lower levels in muscle, placenta, liver and lung.

Its subcellular location is the cell membrane. It catalyses the reaction chloride(in) = chloride(out). It carries out the reaction L-glutamate(out) = L-glutamate(in). Calcium-independent, swelling-dependent volume-regulated anion channel (VRAC-swell) which plays a pivotal role in the process of regulatory volume decrease (RVD) in the brain through the efflux of anions like chloride and organic osmolytes like glutamate. In terms of biological role, ca(2+)-independent, swelling-activated chloride channel, possibly involved in regulation of cell volume. This Homo sapiens (Human) protein is Protein tweety homolog 1 (TTYH1).